Consider the following 1632-residue polypeptide: Guanine exchange factor for Rac 30 (1632 aa).

The 107-residue stretch at 16 to 122 (NIQIDSFTSW…VIFLLIQKIK (107 aa)) folds into the Calponin-homology (CH) domain. 2 disordered regions span residues 134–155 (QGETTGTTTTITSTNTTTTPTK) and 171–285 (FSHI…PTTG). Low complexity-rich tracts occupy residues 137–154 (TTGTTTTITSTNTTTTPT) and 180–284 (QSSS…SPTT). 2 IQ domains span residues 388–417 (DLKKIIFMQSVIRGYLVRSKWRNVLEKYKQ) and 432–461 (AYRGLIRVQAIVKGKIQRKKLFKMFPLYRR). The DH domain maps to 460 to 638 (RRNEIVKEIL…KDVAEYVNEK (179 aa)). The span at 775 to 795 (QINNQNNNQNNNQNNNLNNNN) shows a compositional bias: low complexity. Residues 775 to 798 (QINNQNNNQNNNQNNNLNNNNDDS) form a disordered region. The PH 1 domain occupies 940 to 1038 (DSEFSNVLEK…WISLIRLSIK (99 aa)). Residues 1138–1156 (STSASQSQSQSPSPSPSHS) show a composition bias toward low complexity. The segment at 1138–1161 (STSASQSQSQSPSPSPSHSINQKQ) is disordered. One can recognise an Arf-GAP domain in the interval 1271–1389 (NSCGDNINND…NNNNNNSQNG (119 aa)). The C4-type zinc finger occupies 1286–1309 (CAECGASDPSWVSINYGVVVCLDC). Low complexity-rich tracts occupy residues 1380-1402 (NNNNNNSQNGDSTTPTPTPTSTT), 1409-1431 (STPTSPNLNSQSSPPPTATTTQT), and 1441-1481 (SSPT…TTPT). The segment at 1380-1521 (NNNNNNSQNG…SSHAITERKT (142 aa)) is disordered. The segment covering 1500-1515 (DTSNGKGTWSRGSSHA) has biased composition (polar residues). One can recognise a PH 2 domain in the interval 1532-1631 (KKEHQGYLFK…WLDVLSSHTT (100 aa)).

Its subcellular location is the membrane. It localises to the cytoplasmic vesicle. The protein localises to the phagosome membrane. In terms of biological role, GTPase-activating protein for Rac involved in streaming and development. This chain is Guanine exchange factor for Rac 30 (gxcDD), found in Dictyostelium discoideum (Social amoeba).